The chain runs to 204 residues: Large ribosomal subunit protein uL13 (204 aa).

It belongs to the universal ribosomal protein uL13 family.

In Choristoneura parallela (Spotted fireworm moth), this protein is Large ribosomal subunit protein uL13 (RpL13A).